The chain runs to 88 residues: Meiosis expressed gene 1 protein homolog (88 aa).

The protein belongs to the MEIG1 family. Interacts with PACRG. Interacts with MORN3.

Essential for spermiogenesis. This is Meiosis expressed gene 1 protein homolog from Homo sapiens (Human).